A 581-amino-acid polypeptide reads, in one-letter code: Proline--tRNA ligase (581 aa).

The protein belongs to the class-II aminoacyl-tRNA synthetase family. ProS type 1 subfamily. In terms of assembly, homodimer.

It is found in the cytoplasm. It carries out the reaction tRNA(Pro) + L-proline + ATP = L-prolyl-tRNA(Pro) + AMP + diphosphate. Functionally, catalyzes the attachment of proline to tRNA(Pro) in a two-step reaction: proline is first activated by ATP to form Pro-AMP and then transferred to the acceptor end of tRNA(Pro). As ProRS can inadvertently accommodate and process non-cognate amino acids such as alanine and cysteine, to avoid such errors it has two additional distinct editing activities against alanine. One activity is designated as 'pretransfer' editing and involves the tRNA(Pro)-independent hydrolysis of activated Ala-AMP. The other activity is designated 'posttransfer' editing and involves deacylation of mischarged Ala-tRNA(Pro). The misacylated Cys-tRNA(Pro) is not edited by ProRS. The polypeptide is Proline--tRNA ligase (Blochmanniella floridana).